The following is a 347-amino-acid chain: uncharacterized protein (347 aa).

Mn(2+) contacts are provided by Asp207, Asp218, His279, Glu312, and Glu326.

Belongs to the peptidase M24B family. It depends on Mn(2+) as a cofactor.

This is an uncharacterized protein from Methanocaldococcus jannaschii (strain ATCC 43067 / DSM 2661 / JAL-1 / JCM 10045 / NBRC 100440) (Methanococcus jannaschii).